The chain runs to 541 residues: Protein panoramix (541 aa).

The segment at 1–169 (MEAPMKLEVK…TLVPDEQQSF (169 aa)) is interaction with Piwi. Disordered regions lie at residues 52–75 (SDPE…LQPS) and 198–281 (TAEN…TELD). Residues 194–216 (MLEMTAENRKVKHKKKKHKKERS) are a coiled coil. The span at 203–220 (KVKHKKKKHKKERSHRSN) shows a compositional bias: basic residues. Composition is skewed to basic and acidic residues over residues 241–251 (DDKNQFDCDYR) and 269–279 (SSKERKLRDTE). The segment at 315-343 (LSKADKRSLAVARAELVLEQIQQKANKEE) is nxf2-interacting region (NIR). Residues 323–343 (LAVARAELVLEQIQQKANKEE) adopt a coiled-coil conformation. The interval 387 to 446 (TPGTRIDLSKWGLETVPEATKRLLRLLGIDVARLKELQSTVKPSQRILKLKKEQLEQGLA) is necessary for interaction with nxf2 and protein stability.

In the ovaries, part of a complex composed of at least Panx, nxf2, piwi and Nxt1. The complex is knowns as Panx-induced cotranscriptional silencing (PICTS) complex, Panx-nxf2-dependent TAP/p15 silencing (Pandas complex), SFiNX (silencing factor interacting nuclear export variant) or piwi-Panx-nxf2-p15 (PPNP) complex. Interacts (via NIR region) with nxf2 (via TAP-C domain); the interaction is direct. As to expression, expressed in female gonads (at protein level).

It is found in the nucleus. Its function is as follows. Acts via the piwi-interacting RNA (piRNA) pathway which mediates the repression of transposable elements during meiosis by forming complexes composed of piRNAs and piwi proteins and governs the methylation and subsequent repression of transposons. Required for transcriptional silencing of transposons targeted by piwi and confers its effects by interacting with nascent RNA transcripts. Likely to be recruited to nascent transcripts cotranscriptionally by piwi and to recruit additional factors involved in transcriptional silencing. In the ovaries, forms a complex with nxf2, piwi and Nxt1 which acts as effectors of cotranscriptional transposon silencing. The interaction with nxf2 stabilizes the nuclear protein complex. The protein is Protein panoramix of Drosophila melanogaster (Fruit fly).